The chain runs to 916 residues: DNA ligase 1 (916 aa).

A compositionally biased stretch (polar residues) spans 1-10; the sequence is MQRSIMSFFQ. The tract at residues 1–197 is disordered; the sequence is MQRSIMSFFQ…SPESVTLTKT (197 aa). The segment covering 13–43 has biased composition (basic and acidic residues); that stretch reads KEGKAKKPEKETPSSIREKEPPPKVALKERN. Phosphoserine is present on residues serine 49, serine 51, and serine 65. Threonine 77 is modified (phosphothreonine). The span at 99–111 shows a compositional bias: polar residues; the sequence is PENSPVFNCSSPM. The span at 119-129 shows a compositional bias: basic residues; it reads PKRRTARKQLP. Position 144 is an N6-acetyllysine (lysine 144). A compositionally biased stretch (basic and acidic residues) spans 153-177; the sequence is KEEETPKESLAEAEDIKQKEEKEGD. A compositionally biased stretch (polar residues) spans 185–197; that stretch reads PTKSPESVTLTKT. A Phosphothreonine modification is found at threonine 193. Residue lysine 225 is modified to N6-acetyllysine. Phosphoserine occurs at positions 228 and 229. Threonine 232 bears the Phosphothreonine mark. Residues 236–266 are disordered; sequence PAVKTEVKQEESGTLRKEETKGTLDPANYNP. Positions 238–257 are enriched in basic and acidic residues; the sequence is VKTEVKQEESGTLRKEETKG. The segment at 447 to 456 is interaction with target DNA; it reads RLRLGLAEQS. Position 564 (glutamate 564) interacts with ATP. Lysine 566 serves as the catalytic N6-AMP-lysine intermediate. Arginine 571 and glutamate 619 together coordinate ATP. Glutamate 619 contributes to the Mg(2+) binding site. Positions 640-642 are interaction with target DNA; sequence KRK. Glutamate 718 is a binding site for Mg(2+). The ATP site is built by lysine 723 and lysine 742. A Phosphothreonine modification is found at threonine 796. Residues serine 799, serine 906, serine 907, and serine 911 each carry the phosphoserine modification. The disordered stretch occupies residues 879–916; the sequence is DKQPEQATTSNQVASLYRKQSQIQNQQSSDLDSDVEDY. Residues 883–908 show a composition bias toward polar residues; sequence EQATTSNQVASLYRKQSQIQNQQSSD.

This sequence belongs to the ATP-dependent DNA ligase family. In terms of assembly, interacts with PCNA. Interacts with POLB. Mg(2+) serves as cofactor.

The protein resides in the nucleus. The enzyme catalyses ATP + (deoxyribonucleotide)n-3'-hydroxyl + 5'-phospho-(deoxyribonucleotide)m = (deoxyribonucleotide)n+m + AMP + diphosphate.. In terms of biological role, DNA ligase that seals nicks in double-stranded during DNA repair. Also involved in DNA replication and DNA recombination. The protein is DNA ligase 1 (Lig1) of Mus musculus (Mouse).